The chain runs to 343 residues: MQTKIKKLIAQFHTSLQKNKYDLDKLMILDKEFLGKKGILFELTQELKNLPHAQKSVAGKLINFLKQEIIFTLQKEKETLKRNQLNAKILQEEIDPTLPAFNFCQGSTHPLNQIIEKIEDLFLSLGYEIKEGNEIETLFYNFEMLNMGKGHPAREMQDSFYIDSQKLLRTHTSNIQVKEMKARQGKPLKIISSGKVYRKDDDDATHSHQFMQLEGLVIDKNINFSVLKETLLLITKELFGNSQEIHLRPSYFPFTEPSIEVDLVITKKDGTKEYLEILGAGLVHPQVLKNANYDPEKYQGFAFGIGIERIAMIKYQIENIRYFYANDIRFLKQFARNADNENY.

E256 serves as a coordination point for Mg(2+).

This sequence belongs to the class-II aminoacyl-tRNA synthetase family. Phe-tRNA synthetase alpha subunit type 1 subfamily. As to quaternary structure, tetramer of two alpha and two beta subunits. Requires Mg(2+) as cofactor.

Its subcellular location is the cytoplasm. It catalyses the reaction tRNA(Phe) + L-phenylalanine + ATP = L-phenylalanyl-tRNA(Phe) + AMP + diphosphate + H(+). This Aster yellows witches'-broom phytoplasma (strain AYWB) protein is Phenylalanine--tRNA ligase alpha subunit.